The following is a 283-amino-acid chain: Orotidine 5'-phosphate decarboxylase (283 aa).

The Proton donor role is filled by Lys-97.

This sequence belongs to the OMP decarboxylase family. Type 2 subfamily.

The enzyme catalyses orotidine 5'-phosphate + H(+) = UMP + CO2. Its pathway is pyrimidine metabolism; UMP biosynthesis via de novo pathway; UMP from orotate: step 2/2. The polypeptide is Orotidine 5'-phosphate decarboxylase (Clostridium botulinum (strain Kyoto / Type A2)).